Consider the following 630-residue polypeptide: Subtilisin-like protease 1 (630 aa).

Residues 1–25 (MVLTRRAALLLCPWVIQLVIKRTLA) form the signal peptide. Positions 26-202 (GDILPNEGKK…IESDKLVGAD (177 aa)) are cleaved as a propeptide — inhibition peptide. The interval 72–125 (NAYNPDRDAPKEELQKLQDQQETPSKQPNNLRNSPQKRAEKKESPGKNKKSLRL) is disordered. Over residues 76-87 (PDRDAPKEELQK) the composition is skewed to basic and acidic residues. Positions 94–107 (TPSKQPNNLRNSPQ) are enriched in polar residues. The segment covering 108–117 (KRAEKKESPG) has biased composition (basic and acidic residues). The Ca(2+) site is built by Glu129, Asn130, Thr133, Pro135, and Gly190. Residues 230-254 (LEVPSGESPPSHAASSGSPFDDDDD) are disordered. The span at 233–248 (PSGESPPSHAASSGSP) shows a compositional bias: low complexity. Asp281 is a Ca(2+) binding site. The 318-residue stretch at 287 to 604 (QWGLDLARLD…GGYVDILRAV (318 aa)) folds into the Peptidase S8 domain. Cystine bridges form between Cys313/Cys423, Cys402/Cys419, and Cys465/Cys478. The active-site Charge relay system is the Asp316. Residues Asp325, Glu336, Arg340, Val343, Asp344, Asp345, Asp346, Asn348, Val350, Asp352, and Asp353 each coordinate Ca(2+). His372 (charge relay system) is an active-site residue. Ca(2+)-binding residues include Val383, Asn386, Ile388, and Ile390. Asn546 carries an N-linked (GlcNAc...) asparagine glycan. Catalysis depends on Ser549, which acts as the Charge relay system.

It belongs to the peptidase S8 family. As to quaternary structure, heterodimer between p54 form and prodomain p31; the interaction inhibits p54 catalytic activity. Heterodimer p31-p54 is monomeric at basic pH and dimeric at acidic pH; dimerization is driven by the N-terminal prodomain (p31). Ca(2+) serves as cofactor. The prodomain (p31) is cleaved, probably by autocatalysis, and remains non-covalently associated with the p54 form as an inhibitor. p54 is further cleaved into the p45/p47 forms. In terms of processing, the relevance of the N-glycosylation is not clear. In an insect expression system, SUB1 glycosylation appears to affect its processing into the active mature form suggesting that SUB1 may not be N-glycosylated in parasites.

The protein resides in the secreted. Its subcellular location is the parasitophorous vacuole lumen. It catalyses the reaction Hydrolysis of proteins with broad specificity for peptide bonds, and a preference for a large uncharged residue in P1. Hydrolyzes peptide amides.. Its activity is regulated as follows. Inhibited by peptidic alpha-ketoamide inhibitors. Inhibited by the alpha-ketoamide nonapeptide JMV5126 (isocaproyl-KITAQ(CO)DDEE-NH2). Inhibited by the alpha-ketoamide peptide MAM-117. In terms of biological role, serine protease which plays an essential role in merozoite invasion of and egress from host erythrocytes by processing and activating various merozoite surface and parasitophorous vacuole proteins. The chain is Subtilisin-like protease 1 from Plasmodium vivax.